Consider the following 293-residue polypeptide: Ribosomal protein L11 methyltransferase (293 aa).

Residues T145, G166, D188, and N230 each coordinate S-adenosyl-L-methionine.

The protein belongs to the methyltransferase superfamily. PrmA family.

It localises to the cytoplasm. It catalyses the reaction L-lysyl-[protein] + 3 S-adenosyl-L-methionine = N(6),N(6),N(6)-trimethyl-L-lysyl-[protein] + 3 S-adenosyl-L-homocysteine + 3 H(+). In terms of biological role, methylates ribosomal protein L11. The protein is Ribosomal protein L11 methyltransferase of Pasteurella multocida (strain Pm70).